Reading from the N-terminus, the 330-residue chain is Nitrilase 3 (330 aa).

A CN hydrolase domain is found at 4-273; the sequence is VKAAAVQISP…EGEVIVDLDF (270 aa). Glutamate 44 (proton acceptor) is an active-site residue. Residue lysine 128 is the Proton donor of the active site. Cysteine 162 serves as the catalytic Nucleophile. The segment at 310–330 is disordered; the sequence is RAAHPVSGAEQGPEDLRTPAA.

It belongs to the carbon-nitrogen hydrolase superfamily. Nitrilase family.

It carries out the reaction a nitrile + 2 H2O = a carboxylate + NH4(+). Functionally, nitrilases catalyze the mild hydrolytic conversion of organonitriles directly to the corresponding carboxylic acids. This is Nitrilase 3 from Unknown prokaryotic organism.